Consider the following 300-residue polypeptide: Ecto-ADP-ribosyltransferase 4 (300 aa).

An N-terminal signal peptide occupies residues 1 to 23 (MALWLPGGQLTLLLLLWVQQTPA). The Extracellular portion of the chain corresponds to 24–269 (GSTEAPLKVD…QLLKACSKKC (246 aa)). Cystine bridges form between Cys48–Cys259 and Cys161–Cys210. Residues 70–255 (KYYSRAWQKA…INLRSAGNMS (186 aa)) form the TR mART core domain. 2 N-linked (GlcNAc...) asparagine glycosylation sites follow: Asn110 and Asn157. Gln185 serves as a coordination point for NAD(+). Asn201 carries an N-linked (GlcNAc...) asparagine glycan. Ser219 is an NAD(+) binding site. N-linked (GlcNAc...) asparagine glycosylation occurs at Asn253. The GPI-anchor amidated alanine moiety is linked to residue Ala264. A propeptide spans 265 to 300 (CSKKCAPAPVVIGCLFLVTVVISSKSRAQRNLLAPF) (removed in mature form). A helical transmembrane segment spans residues 270–286 (APAPVVIGCLFLVTVVI). The Cytoplasmic segment spans residues 287–300 (SSKSRAQRNLLAPF).

It belongs to the Arg-specific ADP-ribosyltransferase family.

Its subcellular location is the membrane. The protein resides in the cell membrane. It carries out the reaction L-arginyl-[protein] + NAD(+) = N(omega)-(ADP-D-ribosyl)-L-arginyl-[protein] + nicotinamide + H(+). In Mus musculus (Mouse), this protein is Ecto-ADP-ribosyltransferase 4 (Art4).